A 365-amino-acid polypeptide reads, in one-letter code: tRNA/tmRNA (uracil-C(5))-methyltransferase (365 aa).

Positions 189, 217, 222, 238, and 298 each coordinate S-adenosyl-L-methionine. Catalysis depends on Cys323, which acts as the Nucleophile. Residue Glu357 is the Proton acceptor of the active site.

It belongs to the class I-like SAM-binding methyltransferase superfamily. RNA M5U methyltransferase family. TrmA subfamily.

The enzyme catalyses uridine(54) in tRNA + S-adenosyl-L-methionine = 5-methyluridine(54) in tRNA + S-adenosyl-L-homocysteine + H(+). It carries out the reaction uridine(341) in tmRNA + S-adenosyl-L-methionine = 5-methyluridine(341) in tmRNA + S-adenosyl-L-homocysteine + H(+). In terms of biological role, dual-specificity methyltransferase that catalyzes the formation of 5-methyluridine at position 54 (m5U54) in all tRNAs, and that of position 341 (m5U341) in tmRNA (transfer-mRNA). In Pasteurella multocida (strain Pm70), this protein is tRNA/tmRNA (uracil-C(5))-methyltransferase.